Consider the following 231-residue polypeptide: 5'-methylthioadenosine/S-adenosylhomocysteine nucleosidase (231 aa).

Glutamate 12 serves as the catalytic Proton acceptor. Substrate is bound by residues glycine 78, isoleucine 153, and 174–175 (ME). The active-site Proton donor is the aspartate 198.

It belongs to the PNP/UDP phosphorylase family. MtnN subfamily.

The enzyme catalyses S-adenosyl-L-homocysteine + H2O = S-(5-deoxy-D-ribos-5-yl)-L-homocysteine + adenine. It carries out the reaction S-methyl-5'-thioadenosine + H2O = 5-(methylsulfanyl)-D-ribose + adenine. It catalyses the reaction 5'-deoxyadenosine + H2O = 5-deoxy-D-ribose + adenine. It functions in the pathway amino-acid biosynthesis; L-methionine biosynthesis via salvage pathway; S-methyl-5-thio-alpha-D-ribose 1-phosphate from S-methyl-5'-thioadenosine (hydrolase route): step 1/2. Functionally, catalyzes the irreversible cleavage of the glycosidic bond in both 5'-methylthioadenosine (MTA) and S-adenosylhomocysteine (SAH/AdoHcy) to adenine and the corresponding thioribose, 5'-methylthioribose and S-ribosylhomocysteine, respectively. Also cleaves 5'-deoxyadenosine, a toxic by-product of radical S-adenosylmethionine (SAM) enzymes, into 5-deoxyribose and adenine. The chain is 5'-methylthioadenosine/S-adenosylhomocysteine nucleosidase from Maridesulfovibrio salexigens (strain ATCC 14822 / DSM 2638 / NCIMB 8403 / VKM B-1763) (Desulfovibrio salexigens).